We begin with the raw amino-acid sequence, 249 residues long: Segregation and condensation protein A (249 aa).

This sequence belongs to the ScpA family. As to quaternary structure, component of a cohesin-like complex composed of ScpA, ScpB and the Smc homodimer, in which ScpA and ScpB bind to the head domain of Smc. The presence of the three proteins is required for the association of the complex with DNA.

The protein localises to the cytoplasm. Its function is as follows. Participates in chromosomal partition during cell division. May act via the formation of a condensin-like complex containing Smc and ScpB that pull DNA away from mid-cell into both cell halves. This chain is Segregation and condensation protein A, found in Mycoplasmopsis pulmonis (strain UAB CTIP) (Mycoplasma pulmonis).